Reading from the N-terminus, the 473-residue chain is Aspartyl/glutamyl-tRNA(Asn/Gln) amidotransferase subunit B (473 aa).

Belongs to the GatB/GatE family. GatB subfamily. In terms of assembly, heterotrimer of A, B and C subunits.

The catalysed reaction is L-glutamyl-tRNA(Gln) + L-glutamine + ATP + H2O = L-glutaminyl-tRNA(Gln) + L-glutamate + ADP + phosphate + H(+). It carries out the reaction L-aspartyl-tRNA(Asn) + L-glutamine + ATP + H2O = L-asparaginyl-tRNA(Asn) + L-glutamate + ADP + phosphate + 2 H(+). Functionally, allows the formation of correctly charged Asn-tRNA(Asn) or Gln-tRNA(Gln) through the transamidation of misacylated Asp-tRNA(Asn) or Glu-tRNA(Gln) in organisms which lack either or both of asparaginyl-tRNA or glutaminyl-tRNA synthetases. The reaction takes place in the presence of glutamine and ATP through an activated phospho-Asp-tRNA(Asn) or phospho-Glu-tRNA(Gln). This Francisella tularensis subsp. mediasiatica (strain FSC147) protein is Aspartyl/glutamyl-tRNA(Asn/Gln) amidotransferase subunit B.